Here is a 355-residue protein sequence, read N- to C-terminus: Alanine racemase (355 aa).

Residue K37 is the Proton acceptor; specific for D-alanine of the active site. N6-(pyridoxal phosphate)lysine is present on K37. R129 is a binding site for substrate. Y251 acts as the Proton acceptor; specific for L-alanine in catalysis. Residue M299 participates in substrate binding.

It belongs to the alanine racemase family. It depends on pyridoxal 5'-phosphate as a cofactor.

The catalysed reaction is L-alanine = D-alanine. Its pathway is amino-acid biosynthesis; D-alanine biosynthesis; D-alanine from L-alanine: step 1/1. Its function is as follows. Catalyzes the interconversion of L-alanine and D-alanine. May also act on other amino acids. This chain is Alanine racemase (alr), found in Deinococcus geothermalis (strain DSM 11300 / CIP 105573 / AG-3a).